We begin with the raw amino-acid sequence, 183 residues long: ATP synthase subunit delta (183 aa).

This sequence belongs to the ATPase delta chain family. F-type ATPases have 2 components, F(1) - the catalytic core - and F(0) - the membrane proton channel. F(1) has five subunits: alpha(3), beta(3), gamma(1), delta(1), epsilon(1). F(0) has three main subunits: a(1), b(2) and c(10-14). The alpha and beta chains form an alternating ring which encloses part of the gamma chain. F(1) is attached to F(0) by a central stalk formed by the gamma and epsilon chains, while a peripheral stalk is formed by the delta and b chains.

The protein localises to the cell inner membrane. Its function is as follows. F(1)F(0) ATP synthase produces ATP from ADP in the presence of a proton or sodium gradient. F-type ATPases consist of two structural domains, F(1) containing the extramembraneous catalytic core and F(0) containing the membrane proton channel, linked together by a central stalk and a peripheral stalk. During catalysis, ATP synthesis in the catalytic domain of F(1) is coupled via a rotary mechanism of the central stalk subunits to proton translocation. In terms of biological role, this protein is part of the stalk that links CF(0) to CF(1). It either transmits conformational changes from CF(0) to CF(1) or is implicated in proton conduction. The protein is ATP synthase subunit delta of Maridesulfovibrio salexigens (strain ATCC 14822 / DSM 2638 / NCIMB 8403 / VKM B-1763) (Desulfovibrio salexigens).